Here is a 207-residue protein sequence, read N- to C-terminus: MARYTGPKCKLSRREGTDLFLKSARRSLDSKCKLDSKPGQHGRTSGARTSDYGLQLREKQKLKRMYGVLEKQFRKYFAEAERRRGNTGETLIQLLESRLDNVVYRMGFGSTRAEARQLVSHRAIELNGHTADIASMLVKAGDVITVREGAKKQARIRESLDLAASIGIPQWVEVDSNKMTGTFKSPPDRADVARDVNESMVVELYSR.

The segment at 31 to 51 (KCKLDSKPGQHGRTSGARTSD) is disordered. Residues 97-160 (SRLDNVVYRM…KKQARIRESL (64 aa)) enclose the S4 RNA-binding domain.

Belongs to the universal ribosomal protein uS4 family. Part of the 30S ribosomal subunit. Contacts protein S5. The interaction surface between S4 and S5 is involved in control of translational fidelity.

Functionally, one of the primary rRNA binding proteins, it binds directly to 16S rRNA where it nucleates assembly of the body of the 30S subunit. In terms of biological role, with S5 and S12 plays an important role in translational accuracy. The protein is Small ribosomal subunit protein uS4 of Bordetella avium (strain 197N).